We begin with the raw amino-acid sequence, 199 residues long: NAD(P)H dehydrogenase (quinone) (199 aa).

The Flavodoxin-like domain maps to 4 to 190 (VLVLYYSTYG…DGARFLGQHV (187 aa)). FMN is bound by residues 10-15 (STYGHI) and 78-80 (TRF). Residue tyrosine 12 coordinates NAD(+). Tryptophan 98 contacts substrate. Residues 113-119 (STATQHG) and histidine 134 contribute to the FMN site.

Belongs to the WrbA family. It depends on FMN as a cofactor.

The enzyme catalyses a quinone + NADH + H(+) = a quinol + NAD(+). It carries out the reaction a quinone + NADPH + H(+) = a quinol + NADP(+). This Gluconacetobacter diazotrophicus (strain ATCC 49037 / DSM 5601 / CCUG 37298 / CIP 103539 / LMG 7603 / PAl5) protein is NAD(P)H dehydrogenase (quinone).